Reading from the N-terminus, the 209-residue chain is Uracil phosphoribosyltransferase (209 aa).

5-phospho-alpha-D-ribose 1-diphosphate-binding positions include arginine 79, arginine 104, and 131-139; that span reads DPMLATGGS. Residues isoleucine 194 and 199 to 201 each bind uracil; that span reads GDA. Aspartate 200 serves as a coordination point for 5-phospho-alpha-D-ribose 1-diphosphate.

Belongs to the UPRTase family. It depends on Mg(2+) as a cofactor.

The enzyme catalyses UMP + diphosphate = 5-phospho-alpha-D-ribose 1-diphosphate + uracil. Its pathway is pyrimidine metabolism; UMP biosynthesis via salvage pathway; UMP from uracil: step 1/1. With respect to regulation, allosterically activated by GTP. Functionally, catalyzes the conversion of uracil and 5-phospho-alpha-D-ribose 1-diphosphate (PRPP) to UMP and diphosphate. This is Uracil phosphoribosyltransferase from Bacillus licheniformis (strain ATCC 14580 / DSM 13 / JCM 2505 / CCUG 7422 / NBRC 12200 / NCIMB 9375 / NCTC 10341 / NRRL NRS-1264 / Gibson 46).